Here is a 281-residue protein sequence, read N- to C-terminus: MAQKIVRVGDIQIGNDLPFVLFGGMNVLESRDLAMQVCEEYVRVTEKLGIPYVFKASFDKANRSSIHSFRGPGLEEGMKIFEEIKKTFKVPVITDVHEPHQAQPVAEVCDIIQLPAFLSRQTDLVVAMARTNAVINIKKAQFLAPQEMKHILTKCEEAGNDRLILCERGSSFGYNNLVVDMLGFGIMKQFEYPVFFDVTHALQMPGGRADSAGGRRAQVTDLAKAGLSQKLAGLFLEAHPDPEHAKCDGPCALRLNKLEAFLSQLKQLDELIKSFPAIETA.

The protein belongs to the KdsA family.

It is found in the cytoplasm. The catalysed reaction is D-arabinose 5-phosphate + phosphoenolpyruvate + H2O = 3-deoxy-alpha-D-manno-2-octulosonate-8-phosphate + phosphate. It functions in the pathway carbohydrate biosynthesis; 3-deoxy-D-manno-octulosonate biosynthesis; 3-deoxy-D-manno-octulosonate from D-ribulose 5-phosphate: step 2/3. It participates in bacterial outer membrane biogenesis; lipopolysaccharide biosynthesis. This is 2-dehydro-3-deoxyphosphooctonate aldolase from Pseudomonas paraeruginosa (strain DSM 24068 / PA7) (Pseudomonas aeruginosa (strain PA7)).